Reading from the N-terminus, the 224-residue chain is Probable proteasome subunit beta type-4 (224 aa).

It belongs to the peptidase T1B family. In terms of assembly, the 26S proteasome consists of a 20S proteasome core and two 19S regulatory subunits. The 20S proteasome core is composed of 28 subunits that are arranged in four stacked rings, resulting in a barrel-shaped structure. The two end rings are each formed by seven alpha subunits, and the two central rings are each formed by seven beta subunits. The catalytic chamber with the active sites is on the inside of the barrel.

It is found in the cytoplasm. It localises to the nucleus. Functionally, non-catalytic component of the proteasome, a multicatalytic proteinase complex which is characterized by its ability to cleave peptides with Arg, Phe, Tyr, Leu, and Glu adjacent to the leaving group at neutral or slightly basic pH. The proteasome has an ATP-dependent proteolytic activity. This chain is Probable proteasome subunit beta type-4 (CPR1), found in Cryptococcus neoformans var. neoformans serotype D (strain B-3501A) (Filobasidiella neoformans).